Here is a 446-residue protein sequence, read N- to C-terminus: UDP-N-acetylmuramoylalanine--D-glutamate ligase (446 aa).

Gly112–Thr118 serves as a coordination point for ATP.

This sequence belongs to the MurCDEF family.

It is found in the cytoplasm. The enzyme catalyses UDP-N-acetyl-alpha-D-muramoyl-L-alanine + D-glutamate + ATP = UDP-N-acetyl-alpha-D-muramoyl-L-alanyl-D-glutamate + ADP + phosphate + H(+). The protein operates within cell wall biogenesis; peptidoglycan biosynthesis. Cell wall formation. Catalyzes the addition of glutamate to the nucleotide precursor UDP-N-acetylmuramoyl-L-alanine (UMA). This is UDP-N-acetylmuramoylalanine--D-glutamate ligase from Baumannia cicadellinicola subsp. Homalodisca coagulata.